Here is a 539-residue protein sequence, read N- to C-terminus: CTP synthase (539 aa).

An amidoligase domain region spans residues 1 to 268 (MSFKSIFLTG…SDFLLNKLGF (268 aa)). Position 14 (S14) interacts with CTP. S14 lines the UTP pocket. Position 15 to 20 (15 to 20 (SLGKGL)) interacts with ATP. Y55 contacts L-glutamine. Residue D72 coordinates ATP. Mg(2+) is bound by residues D72 and E142. CTP is bound by residues 149–151 (DIE), 188–193 (KTKPTQ), and K224. UTP is bound by residues 188–193 (KTKPTQ) and K224. Residues 294 to 532 (RIGLVGKYLE…IRAAKAYSLE (239 aa)) enclose the Glutamine amidotransferase type-1 domain. An L-glutamine-binding site is contributed by G353. The Nucleophile; for glutamine hydrolysis role is filled by C380. Residues 381 to 384 (LGMQ), E404, and R460 contribute to the L-glutamine site. Catalysis depends on residues H505 and E507.

This sequence belongs to the CTP synthase family. Homotetramer.

It catalyses the reaction UTP + L-glutamine + ATP + H2O = CTP + L-glutamate + ADP + phosphate + 2 H(+). It carries out the reaction L-glutamine + H2O = L-glutamate + NH4(+). The enzyme catalyses UTP + NH4(+) + ATP = CTP + ADP + phosphate + 2 H(+). It functions in the pathway pyrimidine metabolism; CTP biosynthesis via de novo pathway; CTP from UDP: step 2/2. With respect to regulation, allosterically activated by GTP, when glutamine is the substrate; GTP has no effect on the reaction when ammonia is the substrate. The allosteric effector GTP functions by stabilizing the protein conformation that binds the tetrahedral intermediate(s) formed during glutamine hydrolysis. Inhibited by the product CTP, via allosteric rather than competitive inhibition. Its function is as follows. Catalyzes the ATP-dependent amination of UTP to CTP with either L-glutamine or ammonia as the source of nitrogen. Regulates intracellular CTP levels through interactions with the four ribonucleotide triphosphates. This is CTP synthase from Chlamydia trachomatis serovar L2 (strain ATCC VR-902B / DSM 19102 / 434/Bu).